The following is a 629-amino-acid chain: Ionotropic receptor 75a (629 aa).

The Extracellular segment spans residues 1–335 (MQLVQLANFV…GDVFLQPFSP (335 aa)). N61, N112, N126, N144, N166, and N232 each carry an N-linked (GlcNAc...) asparagine glycan. A helical transmembrane segment spans residues 336 to 356 (LVWYLFGGVLSLIGVLLWITF). The Cytoplasmic segment spans residues 357–374 (YMECKRMQKRWRLDYLPS). Residues 375–395 (LLSTFLISFGAACIQSSSLIP) form a helical membrane-spanning segment. At 396 to 402 (RSAGGRL) the chain is on the extracellular side. The chain crosses the membrane as a helical span at residues 403–423 (IYFALFLISFIMYNYYTSVVV). The Cytoplasmic portion of the chain corresponds to 424–592 (SSLLSSPVKS…NFVITVGMEY (169 aa)). A helical transmembrane segment spans residues 593-613 (VAPLLLMLICADILVVVILLV). Topologically, residues 614–629 (ELAWKRFFTRHLTFHP) are extracellular.

The protein belongs to the glutamate-gated ion channel (TC 1.A.10.1) family. In terms of tissue distribution, expressed in acetic-acid-sensing neurons in the antennal coeloconic 2 (ac2) and antennal coeloconic 3 (ac3) sensilla class of sensory hairs (at protein level).

The protein localises to the cell membrane. The protein resides in the cell projection. It is found in the dendrite. Functionally, odorant receptor for acetic and propionic acid. Functions as part of an olfactory receptor complex including the ionotropic receptor coreceptor Ir8a. In Drosophila melanogaster (Fruit fly), this protein is Ionotropic receptor 75a.